Consider the following 653-residue polypeptide: MKNGLKASVVALFFLLAASSASAATNSVDTVTYESNSDFFDGQVLQVGYTSNFATDKINVYLSESKIESETGAVADEPITFDVSHQNTYAKYPTQDTGLESITGWDAVKKTVSSKQELWDWTTTNCVDTNDAGTFTVDGYGTTDVDARANRWFDTWTGQYKYTIYCWQRNDYYGAVADIGSPDEVFRTEWRLQAGDKNPQTAVITNGDGGTGVTSNLGRYAKVSWEGSLSTGENPPLVDDEYALHSNDYEGGWRVISESRYSSYQSFVQNNADDLLGEWGAGLTTESHIESEMNGKAEEAASEFTESPLSDSEILDSSFQNGAFKLDMERSLMYPEFSVYVDAGENGYATISKPVGKPEIVSTSGAEFGELGQGTISVEAENVGDSEGSFSARTDSCGEYFSGNSLQDTQRVSPGGTASFDFRVTFTSTSMTQSEFSDQCEVVVEDTGSGNEVSASVSVTATQEDECTEGDETKKEKQVNGETVDVIMSCTNGLKLEEDEVCSADEEARYIDDDVQYECRDKDSPPGGGGGDPWTIPGLGWQLDTPFGGMEKALSGNAGALTWAQLLLSFIGFLAGFALVGVKLGKMVDGLATEFIPLSDAVVRLGIGLVGGGMAFMAVYQLVTNPLGFLLTVVGLLLTGYLYLKGTTPDINL.

The first 23 residues, 1-23 (MKNGLKASVVALFFLLAASSASA), serve as a signal peptide directing secretion. Residues 24 to 559 (ATNSVDTVTY…MEKALSGNAG (536 aa)) lie on the Extracellular side of the membrane. 4 cysteine pairs are disulfide-bonded: Cys126/Cys166, Cys397/Cys440, Cys467/Cys490, and Cys502/Cys519. The tract at residues 154–159 (DTWTGQ) is fusion loop. The helical transmembrane segment at 560 to 580 (ALTWAQLLLSFIGFLAGFALV) threads the bilayer. The Cytoplasmic portion of the chain corresponds to 581–600 (GVKLGKMVDGLATEFIPLSD). 2 helical membrane passes run 601–621 (AVVR…AVYQ) and 622–642 (LVTN…TGYL). At 643-653 (YLKGTTPDINL) the chain is on the cytoplasmic side.

The protein belongs to the HAP2/GCS1 family. Fusexin 1 subfamily. As to quaternary structure, homotrimer stabilized by interdomain contacts and numerous Ca(2+) and Na(+) ions.

The protein resides in the cell surface. The protein localises to the cell membrane. In terms of biological role, exhibits fusogenic activity. Mediates cell-cell fusion in mammalian cells (bilateral fusion). The chain is Fusexin 1 from Haloferax sp. (strain Q22).